The following is a 224-amino-acid chain: ATP-dependent dethiobiotin synthetase BioD (224 aa).

14–19 contributes to the ATP binding site; it reads GIGKTV. Position 18 (threonine 18) interacts with Mg(2+). The active site involves lysine 39. Serine 43 lines the substrate pocket. Residues aspartate 56, 117–120, and 177–178 contribute to the ATP site; these read EGVG and NE. Mg(2+) is bound by residues aspartate 56 and glutamate 117.

The protein belongs to the dethiobiotin synthetase family. Homodimer. Requires Mg(2+) as cofactor.

The protein localises to the cytoplasm. The catalysed reaction is (7R,8S)-7,8-diammoniononanoate + CO2 + ATP = (4R,5S)-dethiobiotin + ADP + phosphate + 3 H(+). It participates in cofactor biosynthesis; biotin biosynthesis; biotin from 7,8-diaminononanoate: step 1/2. Catalyzes a mechanistically unusual reaction, the ATP-dependent insertion of CO2 between the N7 and N8 nitrogen atoms of 7,8-diaminopelargonic acid (DAPA, also called 7,8-diammoniononanoate) to form a ureido ring. The chain is ATP-dependent dethiobiotin synthetase BioD from Xanthomonas campestris pv. campestris (strain ATCC 33913 / DSM 3586 / NCPPB 528 / LMG 568 / P 25).